We begin with the raw amino-acid sequence, 517 residues long: MFS-type transporter avaJ (517 aa).

Residues 1 to 12 (MTSPEHSEDERQ) are compositionally biased toward basic and acidic residues. Residues 1 to 28 (MTSPEHSEDERQPLLTKPSGPDESQSGF) are disordered. Residues 40–60 (AMWLLPMYTLYAITAGSLIIP) traverse the membrane as a helical segment. Asn63 carries an N-linked (GlcNAc...) asparagine glycan. The next 5 membrane-spanning stretches (helical) occupy residues 103–123 (IYGTVLSGILGAIAGPNLMGF), 131–151 (PILLISVLGPLIADIIVLAAL), 161–181 (WLLVGYAMDGLSGSIITATTA), 204–224 (AAFTSAFALGPLIAGGLLSVF), and 230–250 (AYWLAFTIHLSLIVLFTLALP). Asn265 carries N-linked (GlcNAc...) asparagine glycosylation. A run of 5 helical transmembrane segments spans residues 299-319 (MYIVAVTEAALFGVSMGLVPL), 338-358 (FLTGVNLWSILVLVAVVPLFM), 391-411 (LLLQVAGYITIAVVHSPLGVI), 442-462 (VLLGAVSFLHAISRILLPSGM), and 476-496 (ALFALLGFGSGIFLVASMFIG). 2 N-linked (GlcNAc...) asparagine glycosylation sites follow: Asn497 and Asn512.

The protein belongs to the major facilitator superfamily. TCR/Tet family.

Its subcellular location is the membrane. Its pathway is secondary metabolite biosynthesis. Its function is as follows. MFS-type transporter; part of the cluster that mediates the biosynthesis of a highly modified cyclo-arginine-tryptophan dipeptide (cRW). The chain is MFS-type transporter avaJ from Aspergillus versicolor.